Reading from the N-terminus, the 155-residue chain is Small ribosomal subunit protein uS7c (155 aa).

This sequence belongs to the universal ribosomal protein uS7 family. As to quaternary structure, part of the 30S ribosomal subunit.

Its subcellular location is the plastid. The protein localises to the chloroplast. One of the primary rRNA binding proteins, it binds directly to 16S rRNA where it nucleates assembly of the head domain of the 30S subunit. The sequence is that of Small ribosomal subunit protein uS7c (rps7) from Butomus umbellatus (Flowering rush).